A 602-amino-acid polypeptide reads, in one-letter code: mRNA-capping enzyme subunit beta (602 aa).

The interval methionine 1 to aspartate 249 is disordered. Residues leucine 15–arginine 42 show a composition bias toward basic and acidic residues. Residues asparagine 48–valine 64 are compositionally biased toward low complexity. Residues isoleucine 65 to glycine 76 are compositionally biased toward acidic residues. The span at aspartate 88 to serine 110 shows a compositional bias: basic and acidic residues. The span at proline 114–serine 128 shows a compositional bias: low complexity. Over residues threonine 141–arginine 169 the composition is skewed to basic and acidic residues. Positions serine 171–threonine 181 are enriched in polar residues. Basic and acidic residues-rich tracts occupy residues threonine 213–threonine 222 and glutamine 231–aspartate 249. Residue lysine 276 is the N6-GMP-lysine intermediate of the active site.

This sequence belongs to the fungal TPase family. As to quaternary structure, heterodimer. The mRNA-capping enzyme is composed of two separate chains alpha and beta, respectively a mRNA guanylyltransferase and an mRNA 5'-triphosphate monophosphatase. Requires Mg(2+) as cofactor.

Its subcellular location is the nucleus. The catalysed reaction is a 5'-end triphospho-ribonucleoside in mRNA + H2O = a 5'-end diphospho-ribonucleoside in mRNA + phosphate + H(+). In terms of biological role, first step of mRNA capping. Converts the 5'-triphosphate end of a nascent mRNA chain into a diphosphate end. This chain is mRNA-capping enzyme subunit beta (CET1), found in Candida glabrata (strain ATCC 2001 / BCRC 20586 / JCM 3761 / NBRC 0622 / NRRL Y-65 / CBS 138) (Yeast).